The sequence spans 70 residues: UPF0352 protein Sfri_2492 (70 aa).

This sequence belongs to the UPF0352 family.

The sequence is that of UPF0352 protein Sfri_2492 from Shewanella frigidimarina (strain NCIMB 400).